Consider the following 694-residue polypeptide: Heat shock protein HSP 90-alpha (694 aa).

Phosphothreonine; by PRKDC occurs at positions 5 and 7. The segment at D9–K236 is interaction with NR3C1. N51 is a binding site for ATP. N6-acetyllysine occurs at positions 58 and 84. Residues D93, K112, and F138 each contribute to the ATP site. Residues K228–K241 show a composition bias toward basic and acidic residues. A disordered region spans residues K228–R275. 2 positions are modified to phosphoserine: S231 and S249. Over residues P242–E255 the composition is skewed to acidic residues. Positions K256–K268 are enriched in basic and acidic residues. Residues D258–A578 are interaction with NR3C1. The segment at I261–R582 is interaction with FNIP2 and TSC1. The segment at I261 to D694 is interaction with FLCN and FNIP1. Y289 carries the post-translational modification Phosphotyrosine. R376 contacts ATP. K419 is subject to N6-acetyllysine. S429 bears the Phosphoserine mark. An N6-acetyllysine modification is found at K434. A Phosphoserine modification is found at S452. K465 is modified (N6-acetyllysine). Y468 bears the Phosphotyrosine mark. K547 is modified (N6-acetyllysine). C560 is modified (S-nitrosocysteine). The tract at residues M590–V693 is interaction with NR1D1. S603 is modified (phosphoserine). The interval Q644–D694 is required for homodimerization. The disordered stretch occupies residues E662–D694. Residues D668–E677 are compositionally biased toward low complexity. The TPR repeat-binding signature appears at D685 to D694. Residues M690 to D694 are essential for interaction with SMYD3, TSC1 and STIP1/HOP. The segment at E691–D694 is essential for interaction with SGTA and TTC1.

This sequence belongs to the heat shock protein 90 family. Homodimer. Identified in NR3C1/GCR steroid receptor-chaperone complexes formed at least by NR3C1, HSP90AA1 and a variety of proteins containing TPR repeats such as FKBP4, FKBP5, PPID, PPP5C or STIP1. Forms a complex containing HSP90AA1, TSC1 and TSC2; TSC1 is required to recruit TCS2 to the complex. The closed form interacts (via the middle domain and TPR repeat-binding motif) with co-chaperone TSC1 (via C-terminus). Interacts with TOM34. Interacts with TERT; the interaction, together with PTGES3, is required for correct assembly and stabilization of the TERT holoenzyme complex. Interacts with CHORDC1 and DNAJC7. Interacts with STUB1 and UBE2N; may couple the chaperone and ubiquitination systems. Interacts (via TPR repeat-binding motif) with PPP5C (via TPR repeats); the interaction is direct and activates PPP5C phosphatase activity. Following LPS binding, may form a complex with CXCR4, GDF5 and HSPA8. Interacts with KSR1. Interacts with co-chaperone CDC37 (via C-terminus); the interaction inhibits HSP90AA1 ATPase activity. May interact with NWD1. Interacts with FNIP1 and FNIP2; the interaction inhibits HSP90AA1 ATPase activity. Interacts with co-chaperone AHSA1 (phosphorylated on 'Tyr-223'); the interaction activates HSP90AA1 ATPase activity and results in the dissociation of TSC1 from HSP90AA1. Interacts with FLCN in the presence of FNIP1. Interacts with HSP70, STIP1 and PTGES3. Interacts with SMYD3; this interaction enhances SMYD3 histone-lysine N-methyltransferase. Interacts with SGTA (via TPR repeats). Interacts with TTC1 (via TPR repeats). Interacts with HSF1 in an ATP-dependent manner. Interacts with MET; the interaction suppresses MET kinase activity. Interacts with ERBB2 in an ATP-dependent manner; the interaction suppresses ERBB2 kinase activity. Interacts with HIF1A, KEAP1 and RHOBTB2. Interacts with HSF1; this interaction is decreased in a IER5-dependent manner, promoting HSF1 accumulation in the nucleus, homotrimerization and DNA-binding activities. Interacts with STUB1 and SMAD3. Interacts with HSP90AB1; interaction is constitutive. Interacts with HECTD1 (via N-terminus). Interacts with NR3C1 (via domain NR LBD) and NR1D1 (via domain NR LBD). Interacts with NLPR12. Interacts with PDCL3. Interacts with TOMM70; the interaction is required for preprotein mitochondrial import. Interacts with TOMM70, IRF3 and TBK1; the interactions are direct and mediate the association of TOMM70 with IRF3 and TBK1. Forms a complex with ASL, ASS1 and NOS2; the complex regulates cell-autonomous L-arginine synthesis and citrulline recycling while channeling extracellular L-arginine to nitric oxide synthesis pathway. ISGylated. Post-translationally, S-nitrosylated; negatively regulates the ATPase activity and the activation of eNOS by HSP90AA1. In terms of processing, ubiquitinated via 'Lys-63'-linked polyubiquitination by HECTD1. Ubiquitination promotes translocation into the cytoplasm away from the membrane and secretory pathways.

The protein localises to the nucleus. It is found in the cytoplasm. Its subcellular location is the melanosome. It localises to the cell membrane. The protein resides in the mitochondrion. It catalyses the reaction ATP + H2O = ADP + phosphate + H(+). With respect to regulation, in the resting state, through the dimerization of its C-terminal domain, HSP90 forms a homodimer which is defined as the open conformation. Upon ATP-binding, the N-terminal domain undergoes significant conformational changes and comes in contact to form an active closed conformation. After HSP90 finishes its chaperoning tasks of assisting the proper folding, stabilization and activation of client proteins under the active state, ATP molecule is hydrolyzed to ADP which then dissociates from HSP90 and directs the protein back to the resting state. Co-chaperone TSC1 promotes ATP binding and inhibits HSP90AA1 ATPase activity. Binding to phosphorylated AHSA1 promotes HSP90AA1 ATPase activity. Inhibited by geldanamycin, Ganetespib (STA-9090) and SNX-2112. Its function is as follows. Molecular chaperone that promotes the maturation, structural maintenance and proper regulation of specific target proteins involved for instance in cell cycle control and signal transduction. Undergoes a functional cycle that is linked to its ATPase activity which is essential for its chaperone activity. This cycle probably induces conformational changes in the client proteins, thereby causing their activation. Interacts dynamically with various co-chaperones that modulate its substrate recognition, ATPase cycle and chaperone function. Engages with a range of client protein classes via its interaction with various co-chaperone proteins or complexes, that act as adapters, simultaneously able to interact with the specific client and the central chaperone itself. Recruitment of ATP and co-chaperone followed by client protein forms a functional chaperone. After the completion of the chaperoning process, properly folded client protein and co-chaperone leave HSP90 in an ADP-bound partially open conformation and finally, ADP is released from HSP90 which acquires an open conformation for the next cycle. Plays a critical role in mitochondrial import, delivers preproteins to the mitochondrial import receptor TOMM70. Apart from its chaperone activity, it also plays a role in the regulation of the transcription machinery. HSP90 and its co-chaperones modulate transcription at least at three different levels. In the first place, they alter the steady-state levels of certain transcription factors in response to various physiological cues. Second, they modulate the activity of certain epigenetic modifiers, such as histone deacetylases or DNA methyl transferases, and thereby respond to the change in the environment. Third, they participate in the eviction of histones from the promoter region of certain genes and thereby turn on gene expression. Binds bacterial lipopolysaccharide (LPS) and mediates LPS-induced inflammatory response, including TNF secretion by monocytes. Antagonizes STUB1-mediated inhibition of TGF-beta signaling via inhibition of STUB1-mediated SMAD3 ubiquitination and degradation. Mediates the association of TOMM70 with IRF3 or TBK1 in mitochondrial outer membrane which promotes host antiviral response. This chain is Heat shock protein HSP 90-alpha (HSP90AA1), found in Oryctolagus cuniculus (Rabbit).